Consider the following 315-residue polypeptide: 4-carboxy-2-hydroxymuconate-6-semialdehyde dehydrogenase (315 aa).

Belongs to the Gfo/Idh/MocA family. As to quaternary structure, homodimer.

The enzyme catalyses 4-carboxy-2-hydroxymuconate semialdehyde hemiacetal + NADP(+) = 2-oxo-2H-pyran-4,6-dicarboxylate + NADPH + H(+). The protein operates within secondary metabolite metabolism; lignin degradation. Inhibited by p-chloromercuribenzoate (10 mM), HgCl2 (10 mM), or 5,5-dithiobis(2-nitrobenzoate) (100 mM). Involved in the degradation of protocatechuate (PCA) via the PCA 4,5-cleavage pathway. Catalyzes the oxidation of the hemiacetal form of 4-carboxy-2-hydroxymuconate-6-semialdehyde (CHMS) to produce 2-pyrone-4,6-dicarboxylate (PDC). LigC has 10-times-higher affinity to NADP than to NAD. In Sphingobium sp. (strain NBRC 103272 / SYK-6), this protein is 4-carboxy-2-hydroxymuconate-6-semialdehyde dehydrogenase (ligC).